Consider the following 505-residue polypeptide: Trans-cinnamate 4-monooxygenase (505 aa).

Residues 3-23 traverse the membrane as a helical segment; it reads LLLLEKTLLGSFVAILVAILV. Residues 213 to 218 and A306 each bind (E)-cinnamate; that span reads RSRLAQ. C447 provides a ligand contact to heme.

Belongs to the cytochrome P450 family. Requires heme as cofactor.

Its subcellular location is the membrane. It catalyses the reaction (E)-cinnamate + reduced [NADPH--hemoprotein reductase] + O2 = (E)-4-coumarate + oxidized [NADPH--hemoprotein reductase] + H2O + H(+). The protein operates within phenylpropanoid metabolism; trans-4-coumarate biosynthesis; trans-4-coumarate from trans-cinnamate: step 1/1. Catalyzes the first oxidative step of the phenylpropanoid pathway in higher plants by transforming trans-cinnamate into p-coumarate. The compounds formed by this pathway are essential components for lignification, pollination, and defense against ultraviolet light, predators and pathogens. The protein is Trans-cinnamate 4-monooxygenase (CYP73A13) of Populus tremuloides (Quaking aspen).